A 119-amino-acid chain; its full sequence is Ribonuclease P protein component (119 aa).

The protein belongs to the RnpA family. Consists of a catalytic RNA component (M1 or rnpB) and a protein subunit.

The enzyme catalyses Endonucleolytic cleavage of RNA, removing 5'-extranucleotides from tRNA precursor.. In terms of biological role, RNaseP catalyzes the removal of the 5'-leader sequence from pre-tRNA to produce the mature 5'-terminus. It can also cleave other RNA substrates such as 4.5S RNA. The protein component plays an auxiliary but essential role in vivo by binding to the 5'-leader sequence and broadening the substrate specificity of the ribozyme. The protein is Ribonuclease P protein component of Corynebacterium diphtheriae (strain ATCC 700971 / NCTC 13129 / Biotype gravis).